The primary structure comprises 334 residues: Chitin synthase export chaperone (334 aa).

Transmembrane regions (helical) follow at residues 49 to 69, 85 to 105, 123 to 143, 159 to 179, 185 to 205, 220 to 240, and 244 to 264; these read IIFE…TVIM, ILSF…IDAG, GLSS…FQLY, LAAF…WAGL, VGLF…YVAM, LGDI…LYAF, and ICIA…CNLL.

Belongs to the CHS7 family.

It is found in the endoplasmic reticulum membrane. Functionally, chaperone required for the export of the chitin synthase chs3 from the endoplasmic reticulum. Plays a critical role in cell wall integrity and virulence. In Fusarium oxysporum f. sp. lycopersici (strain 4287 / CBS 123668 / FGSC 9935 / NRRL 34936) (Fusarium vascular wilt of tomato), this protein is Chitin synthase export chaperone.